Reading from the N-terminus, the 394-residue chain is Serine palmitoyltransferase (394 aa).

Pyridoxal 5'-phosphate is bound by residues 111 to 112, Ser-183, His-211, and Thr-239; that span reads GF. Lys-242 is modified (N6-(pyridoxal phosphate)lysine).

The protein belongs to the class-II pyridoxal-phosphate-dependent aminotransferase family. It depends on pyridoxal 5'-phosphate as a cofactor.

The catalysed reaction is L-serine + hexadecanoyl-CoA + H(+) = 3-oxosphinganine + CO2 + CoA. Its pathway is lipid metabolism; sphingolipid metabolism. In terms of biological role, involved in de novo bacterial ceramide synthesis. Catalyzes the condensation of L-serine with palmitoyl-CoA (hexadecanoyl-CoA) to produce 3-oxosphinganine. Also capable of using alanine as substrate leading to the formation of 1-deoxysphinganine (1-deoxySa). Contributes to the levels of endogenous sphingolipids in its host. This Bacteroides ovatus (strain ATCC 8483 / DSM 1896 / JCM 5824 / BCRC 10623 / CCUG 4943 / NCTC 11153) protein is Serine palmitoyltransferase.